A 357-amino-acid polypeptide reads, in one-letter code: Protein ATP1B4 (357 aa).

Over 1 to 110 (MRRQLRSRRA…FLARTGQSWS (110 aa)) the chain is Nuclear. The disordered stretch occupies residues 15–80 (YSYRYRLDDP…EEGQGQPTGN (66 aa)). The span at 52–73 (EEEEEEEEKEEEEEEEKEEEEG) shows a compositional bias: acidic residues. Residues 111 to 131 (LILLIYFFFYASLAAVITLCM) traverse the membrane as a helical; Signal-anchor for type II membrane protein segment. Over 132–357 (YTLFLTISPY…RVIFTLNIET (226 aa)) the chain is Perinuclear space.

The protein belongs to the X(+)/potassium ATPases subunit beta family. As to quaternary structure, associates with a SMAD7-transcriptional complex. Interacts with SNW1 and TOR1AIP1. According to PubMed:17592128, does not associate with known Na,K-ATPase alpha-subunits. In terms of tissue distribution, highly expressed in skeletal muscle and at a lower level in heart.

The protein localises to the nucleus inner membrane. In terms of biological role, may act as a transcriptional coregulator during muscle development through its interaction with SNW1. Has lost its ancestral function as a Na,K-ATPase beta-subunit. The polypeptide is Protein ATP1B4 (ATP1B4) (Homo sapiens (Human)).